The primary structure comprises 415 residues: Gamma-glutamyl phosphate reductase (415 aa).

This sequence belongs to the gamma-glutamyl phosphate reductase family.

It localises to the cytoplasm. The enzyme catalyses L-glutamate 5-semialdehyde + phosphate + NADP(+) = L-glutamyl 5-phosphate + NADPH + H(+). Its pathway is amino-acid biosynthesis; L-proline biosynthesis; L-glutamate 5-semialdehyde from L-glutamate: step 2/2. Catalyzes the NADPH-dependent reduction of L-glutamate 5-phosphate into L-glutamate 5-semialdehyde and phosphate. The product spontaneously undergoes cyclization to form 1-pyrroline-5-carboxylate. The protein is Gamma-glutamyl phosphate reductase of Pseudoalteromonas translucida (strain TAC 125).